Reading from the N-terminus, the 199-residue chain is Adenylyl-sulfate kinase (199 aa).

Residue 31 to 38 coordinates ATP; it reads GLSGSGKS. Serine 105 acts as the Phosphoserine intermediate in catalysis.

The protein belongs to the APS kinase family.

It carries out the reaction adenosine 5'-phosphosulfate + ATP = 3'-phosphoadenylyl sulfate + ADP + H(+). It functions in the pathway sulfur metabolism; hydrogen sulfide biosynthesis; sulfite from sulfate: step 2/3. Catalyzes the synthesis of activated sulfate. The protein is Adenylyl-sulfate kinase of Marinobacter nauticus (strain ATCC 700491 / DSM 11845 / VT8) (Marinobacter aquaeolei).